The primary structure comprises 423 residues: COP9 signalosome complex subunit 3 (423 aa).

Residues 197-365 enclose the PCI domain; the sequence is NFERAMYFYE…GMVCFHDSPE (169 aa). The span at 401-410 shows a compositional bias: polar residues; sequence PQFVQKSMGS. The tract at residues 401–423 is disordered; the sequence is PQFVQKSMGSQEDDSGSKPSSYS.

Belongs to the CSN3 family. In terms of assembly, component of the CSN complex, probably composed of cops1, cops2, cops3, cops4, cops5, cops6, cops7, cops8 and cops9.

The protein resides in the cytoplasm. The protein localises to the nucleus. Component of the COP9 signalosome complex (CSN), a complex involved in various cellular and developmental processes. The CSN complex is an essential regulator of the ubiquitin (Ubl) conjugation pathway by mediating the deneddylation of the cullin subunits of E3 ligase complexes, leading to modify the Ubl ligase activity. This Xenopus laevis (African clawed frog) protein is COP9 signalosome complex subunit 3 (cops3).